The sequence spans 348 residues: Ferredoxin--NADP reductase 1 (348 aa).

FAD-binding residues include Glu-36, Lys-44, Tyr-48, Ile-88, Pro-123, Asp-285, and Ser-326. The tract at residues 329 to 348 is disordered; it reads EKFKKKNEQLKQEKQAQLMN.

Belongs to the ferredoxin--NADP reductase type 2 family. As to quaternary structure, homodimer. It depends on FAD as a cofactor.

The catalysed reaction is 2 reduced [2Fe-2S]-[ferredoxin] + NADP(+) + H(+) = 2 oxidized [2Fe-2S]-[ferredoxin] + NADPH. The chain is Ferredoxin--NADP reductase 1 from Shouchella clausii (strain KSM-K16) (Alkalihalobacillus clausii).